Reading from the N-terminus, the 111-residue chain is MRLSVFYIFITRLAMTKNATKNEMGSKSPNIVALVLPLLLILYTLSSQVEVVESTGRKLAFWGNPIVWTPHSNSCGGSPASVFASSKWTTGRPCRRSRPPGTNIPVSDQSP.

The first 46 residues, 1-46 (MRLSVFYIFITRLAMTKNATKNEMGSKSPNIVALVLPLLLILYTLS), serve as a signal peptide directing secretion. The SCOOP motif signature appears at 66–79 (IVWTPHSNSCGGSP). Positions 72-74 (SNS) match the SxS motif essential for MIK2 binding motif. Positions 89 to 111 (TTGRPCRRSRPPGTNIPVSDQSP) are disordered.

This sequence belongs to the serine rich endogenous peptide (SCOOP) phytocytokine family. Interacts with MIK2 (via extracellular leucine-rich repeat domain); this interaction triggers the formation of complex between MIK2 and the BAK1/SERK3 and SERK4 coreceptors, and subsequent BAK1 activation by phosphorylation. In terms of tissue distribution, mostly expressed in leaves, and, to a lower extent, in roots, stems, siliques, seeds and flowers.

It localises to the cell membrane. It is found in the secreted. The protein localises to the extracellular space. The protein resides in the apoplast. Brassicaceae-specific phytocytokine (plant endogenous peptide released into the apoplast) perceived by MIK2 in a BAK1/SERK3 and SERK4 coreceptors-dependent manner, that modulates various physiological and antimicrobial processes including growth prevention and reactive oxygen species (ROS) response regulation. This Arabidopsis thaliana (Mouse-ear cress) protein is Secreted transmembrane peptide 5.